A 290-amino-acid polypeptide reads, in one-letter code: Ciliary microtubule inner protein 6 (290 aa).

Residues 76-112 (ENQGDWWPHGKGLENPFQPPYDTKSTQRSDFKKPTCP) form a disordered region. 2 mn regions span residues 128 to 160 (GIVPLVSPDASAELQRNFKEHISFIHQYDARKT) and 213 to 246 (SAESKMISPGLCRQNSQELLETKTHLSETDIRVA). The tract at residues 197–228 (SGSCSSEQSKKTEKGNSAESKMISPGLCRQNS) is disordered.

Its subcellular location is the cell projection. It localises to the cilium. The chain is Ciliary microtubule inner protein 6 (CIMIP6) from Bos taurus (Bovine).